A 292-amino-acid chain; its full sequence is MLGTVLLLALLPGITTLPSGPPAPPFPAAPGPWLRRPLFSLKLSDTEDVFPRRAGPLEVPADSRVFVQAALARPSPRWGLALHRCSVTPSSRPAPGPALALLREGCPADTSVAFPPPPPPSPGAARPARFSFRLRPVFNASVQFLHCQLSRCRRLRGVRRAPAPLTPPPPPPPSRCLPQDEACADTGSGSAEGLAADGPHLHTLTQPIVVTVPRPPPRPPKSVPGRAVRPEPPAPAPAALEPAPVVALVLAAFVLGAALAAGLGLVCAHSAPHAPGPPARASPSGPQPRRSQ.

The signal sequence occupies residues 1 to 16 (MLGTVLLLALLPGITT). The ZP; truncated domain maps to 17–170 (LPSGPPAPPF…APAPLTPPPP (154 aa)). Over 17-244 (LPSGPPAPPF…PAPAALEPAP (228 aa)) the chain is Extracellular. Cysteine 85 and cysteine 147 form a disulfide bridge. Residues 160–236 (RAPAPLTPPP…AVRPEPPAPA (77 aa)) form a disordered region. 2 stretches are compositionally biased toward pro residues: residues 164 to 175 (PLTPPPPPPPSR) and 213 to 222 (PRPPPRPPKS). Residues 245 to 265 (VVALVLAAFVLGAALAAGLGL) form a helical membrane-spanning segment. The Cytoplasmic segment spans residues 266-292 (VCAHSAPHAPGPPARASPSGPQPRRSQ). The interval 273-292 (HAPGPPARASPSGPQPRRSQ) is disordered. A compositionally biased stretch (low complexity) spans 281–292 (ASPSGPQPRRSQ).

In terms of processing, glycosylated. Expressed in pituitary gland gonadotrope cells.

The protein localises to the cell membrane. In terms of biological role, expressed in gonadotrope cells, acts as an inhibin B coreceptor and regulates follicle-stimulating hormone (FSH) levels and female fertility. The polypeptide is Transforming growth factor-beta receptor type 3-like protein (Homo sapiens (Human)).